Consider the following 428-residue polypeptide: tRNA modification GTPase MnmE (428 aa).

3 residues coordinate (6S)-5-formyl-5,6,7,8-tetrahydrofolate: Arg-20, Glu-76, and Arg-116. In terms of domain architecture, TrmE-type G spans 212–351; the sequence is GFEVAIVGAP…LVAAIGERLL (140 aa). Asn-222 contributes to the K(+) binding site. GTP-binding positions include 222 to 227, 241 to 247, and 266 to 269; these read NAGKST, SEIAGTT, and DTAG. Mg(2+) is bound at residue Ser-226. Residues Ser-241, Ile-243, and Thr-246 each contribute to the K(+) site. Thr-247 is a Mg(2+) binding site. (6S)-5-formyl-5,6,7,8-tetrahydrofolate is bound at residue Lys-428.

The protein belongs to the TRAFAC class TrmE-Era-EngA-EngB-Septin-like GTPase superfamily. TrmE GTPase family. Homodimer. Heterotetramer of two MnmE and two MnmG subunits. Requires K(+) as cofactor.

It is found in the cytoplasm. Exhibits a very high intrinsic GTPase hydrolysis rate. Involved in the addition of a carboxymethylaminomethyl (cmnm) group at the wobble position (U34) of certain tRNAs, forming tRNA-cmnm(5)s(2)U34. This is tRNA modification GTPase MnmE from Cereibacter sphaeroides (strain ATCC 17029 / ATH 2.4.9) (Rhodobacter sphaeroides).